Here is a 209-residue protein sequence, read N- to C-terminus: Urease accessory protein UreG (209 aa).

Residue 10-17 (GPVGSGKT) coordinates GTP.

The protein belongs to the SIMIBI class G3E GTPase family. UreG subfamily. In terms of assembly, homodimer. UreD, UreF and UreG form a complex that acts as a GTP-hydrolysis-dependent molecular chaperone, activating the urease apoprotein by helping to assemble the nickel containing metallocenter of UreC. The UreE protein probably delivers the nickel.

The protein resides in the cytoplasm. In terms of biological role, facilitates the functional incorporation of the urease nickel metallocenter. This process requires GTP hydrolysis, probably effectuated by UreG. This Lysinibacillus sphaericus (strain C3-41) protein is Urease accessory protein UreG.